A 20-amino-acid chain; its full sequence is Haemoporin (20 aa).

Residues 1 to 20 (AAVPEAAAEATAEAAPVSEF) form a disordered region.

In terms of assembly, homopentamer. Forms a cylindrical structure with a central pore. Detected in the hemolymph.

Its subcellular location is the secreted. This is Haemoporin from Aplysia californica (California sea hare).